Reading from the N-terminus, the 240-residue chain is Probable phosphatase Pcar_2586 (240 aa).

Residues histidine 12, histidine 14, histidine 20, histidine 45, glutamate 78, histidine 105, histidine 136, aspartate 197, and histidine 199 each coordinate Zn(2+).

This sequence belongs to the PHP family. Requires Zn(2+) as cofactor.

The protein is Probable phosphatase Pcar_2586 of Syntrophotalea carbinolica (strain DSM 2380 / NBRC 103641 / GraBd1) (Pelobacter carbinolicus).